The primary structure comprises 96 residues: Putative toxin Y4kP (96 aa).

This sequence belongs to the RelE toxin family.

Toxic component of a type II toxin-antitoxin (TA) system. The chain is Putative toxin Y4kP from Sinorhizobium fredii (strain NBRC 101917 / NGR234).